Reading from the N-terminus, the 784-residue chain is Cation/H(+) antiporter 26 (784 aa).

11 consecutive transmembrane segments (helical) span residues 38-58, 61-81, 97-117, 130-150, 201-221, 240-260, 286-306, 321-341, 351-371, 376-396, and 413-433; these read PLLL…QALL, LANV…PSAL, YFII…ISTA, LAII…AIAC, LALS…LLLI, FTKV…FNWI, TFLS…LGLV, IGSF…GNKV, IISL…SIVL, FQVP…QGIY, and EAFG…TAIV.

It belongs to the monovalent cation:proton antiporter 2 (CPA2) transporter (TC 2.A.37) family. CHX (TC 2.A.37.4) subfamily. In terms of tissue distribution, expressed in pollen.

The protein resides in the membrane. Functionally, may operate as a cation/H(+) antiporter. This chain is Cation/H(+) antiporter 26 (CHX26), found in Arabidopsis thaliana (Mouse-ear cress).